Reading from the N-terminus, the 52-residue chain is Ovomucoid (52 aa).

The region spanning V2–C52 is the Kazal-like domain. Cystine bridges form between C4-C34, C12-C31, and C20-C52. An N-linked (GlcNAc...) asparagine glycan is attached at N41.

It is found in the secreted. The chain is Ovomucoid from Scythrops novaehollandiae (Channel-billed cuckoo).